Consider the following 127-residue polypeptide: MARIAGVDLPKRKRIEIGLTYIFGIGRSTSSKILEELGIDPDTKTDDLTEGQVNDIRKLIDSKYRVEGELRTQISMNIKRLMDLGCYRGLRHRRGLPVHGQRTSTNARTRKGPRRAAVKKKGGAKKK.

The interval 95 to 127 is disordered; the sequence is GLPVHGQRTSTNARTRKGPRRAAVKKKGGAKKK. Residues 108 to 127 show a composition bias toward basic residues; it reads RTRKGPRRAAVKKKGGAKKK.

Belongs to the universal ribosomal protein uS13 family. Part of the 30S ribosomal subunit. Forms a loose heterodimer with protein S19. Forms two bridges to the 50S subunit in the 70S ribosome.

In terms of biological role, located at the top of the head of the 30S subunit, it contacts several helices of the 16S rRNA. In the 70S ribosome it contacts the 23S rRNA (bridge B1a) and protein L5 of the 50S subunit (bridge B1b), connecting the 2 subunits; these bridges are implicated in subunit movement. Contacts the tRNAs in the A and P-sites. The sequence is that of Small ribosomal subunit protein uS13 from Desulfatibacillum aliphaticivorans.